Here is an 863-residue protein sequence, read N- to C-terminus: Leucine--tRNA ligase (863 aa).

The 'HIGH' region motif lies at 42–52; that stretch reads PYPSGRLHMGH. A 'KMSKS' region motif is present at residues 622–626; sequence KMSKS. An ATP-binding site is contributed by lysine 625.

Belongs to the class-I aminoacyl-tRNA synthetase family.

The protein resides in the cytoplasm. It catalyses the reaction tRNA(Leu) + L-leucine + ATP = L-leucyl-tRNA(Leu) + AMP + diphosphate. The protein is Leucine--tRNA ligase of Shewanella sediminis (strain HAW-EB3).